The following is a 239-amino-acid chain: Dolichyldiphosphatase (239 aa).

The Lumenal segment spans residues 1–34 (MNSTAAAINPNPNVIPFDDTYILYDSHDFLSFLS). The helical transmembrane segment at 35–55 (AYFSLMPILVLAFYLSWFIIT) threads the bilayer. Residues 56–131 (RELEACIVAF…KIYTSWKNLN (76 aa)) are Cytoplasmic-facing. Residues 132–152 (FLEKCIFSGALALLSFCVCFS) form a helical membrane-spanning segment. Residues 153–164 (RVYLHYHNLDQV) lie on the Lumenal side of the membrane. A helical transmembrane segment spans residues 165–185 (IVGFSVGALTGSLYFFIVGII). Over 186 to 239 (RELGLINWFLKLRIVRLFYMTDSYNLAPLTLKENYEAYWKRINQRSFNDKSKRD) the chain is Cytoplasmic.

It belongs to the dolichyldiphosphatase family.

Its subcellular location is the endoplasmic reticulum membrane. It catalyses the reaction a di-trans,poly-cis-dolichyl diphosphate + H2O = a di-trans,poly-cis-dolichyl phosphate + phosphate + H(+). Its pathway is protein modification; protein glycosylation. Functionally, non-essential protein which is required for efficient N-glycosylation. Necessary for maintaining optimal levels of dolichol-linked oligosaccharides. Hydrolyzes dolichyl pyrophosphate at a very high rate and dolichyl monophosphate at a much lower rate. Does not act on phosphatidate. The sequence is that of Dolichyldiphosphatase (CAX4) from Saccharomyces cerevisiae (strain ATCC 204508 / S288c) (Baker's yeast).